The following is a 697-amino-acid chain: Polyribonucleotide nucleotidyltransferase (697 aa).

2 residues coordinate Mg(2+): Asp-487 and Asp-493. The KH domain maps to 554–613 (PRIETIQIKPSKIAVVIGPGGKQIRAIIEQTGVQIDIDDTGLVNIAAIDLVSIEKAKAII). Residues 623–691 (GRIYSGKAIS…ERGQIKLSRK (69 aa)) form the S1 motif domain.

The protein belongs to the polyribonucleotide nucleotidyltransferase family. Mg(2+) serves as cofactor.

Its subcellular location is the cytoplasm. It carries out the reaction RNA(n+1) + phosphate = RNA(n) + a ribonucleoside 5'-diphosphate. In terms of biological role, involved in mRNA degradation. Catalyzes the phosphorolysis of single-stranded polyribonucleotides processively in the 3'- to 5'-direction. In Protochlamydia amoebophila (strain UWE25), this protein is Polyribonucleotide nucleotidyltransferase.